A 55-amino-acid polypeptide reads, in one-letter code: Large ribosomal subunit protein bL33 (55 aa).

Over residues 1 to 11 (MAKGGREKIKL) the composition is skewed to basic and acidic residues. A disordered region spans residues 1-29 (MAKGGREKIKLESTAGTGHFYTTTKNKKT). A compositionally biased stretch (polar residues) spans 14 to 24 (TAGTGHFYTTT).

This sequence belongs to the bacterial ribosomal protein bL33 family.

This is Large ribosomal subunit protein bL33 from Thiobacillus denitrificans (strain ATCC 25259 / T1).